The sequence spans 492 residues: NAD(P)H-quinone oxidoreductase subunit 2 A, chloroplastic (492 aa).

13 helical membrane passes run 6-26 (LLLFDGSLIFPECILIFGLIL), 39-59 (ISWFYFISSTSLVMSITALLF), 81-101 (IFQFLILLCSTLCIPLSVEYI), 106-126 (MAITEFLLFILTTTLGGMFLC), 131-151 (LITIFVALECFSLCSYLLSGY), 165-185 (YLLMGGASSSILVHGFSWLYG), 209-229 (PGILIALLFITVGIGFKLSPA), 277-297 (WHLLLEILAILSMILGNLIAI), 305-325 (MLAYSSIGQIGYVIIGIIVGD), 336-356 (YMLFYISMNLGTFACIVSFGL), 377-397 (ALSLALCLLSLGGLPPLAGFF), 400-420 (LHLFWCGWQAGLYFLVSIGLL), and 464-484 (FSMIVCVIASTIPGISMNPII).

It belongs to the complex I subunit 2 family. NDH is composed of at least 16 different subunits, 5 of which are encoded in the nucleus.

The protein resides in the plastid. It is found in the chloroplast thylakoid membrane. It carries out the reaction a plastoquinone + NADH + (n+1) H(+)(in) = a plastoquinol + NAD(+) + n H(+)(out). The catalysed reaction is a plastoquinone + NADPH + (n+1) H(+)(in) = a plastoquinol + NADP(+) + n H(+)(out). NDH shuttles electrons from NAD(P)H:plastoquinone, via FMN and iron-sulfur (Fe-S) centers, to quinones in the photosynthetic chain and possibly in a chloroplast respiratory chain. The immediate electron acceptor for the enzyme in this species is believed to be plastoquinone. Couples the redox reaction to proton translocation, and thus conserves the redox energy in a proton gradient. This Phaseolus vulgaris (Kidney bean) protein is NAD(P)H-quinone oxidoreductase subunit 2 A, chloroplastic.